Consider the following 121-residue polypeptide: Flagellar hook-basal body complex protein FliE (121 aa).

Belongs to the FliE family.

It is found in the bacterial flagellum basal body. This chain is Flagellar hook-basal body complex protein FliE, found in Saccharophagus degradans (strain 2-40 / ATCC 43961 / DSM 17024).